Reading from the N-terminus, the 494-residue chain is Probable cytosol aminopeptidase (494 aa).

The Mn(2+) site is built by Lys260 and Asp265. Lys272 is an active-site residue. Positions 283, 342, and 344 each coordinate Mn(2+). Arg346 is an active-site residue.

It belongs to the peptidase M17 family. It depends on Mn(2+) as a cofactor.

The protein resides in the cytoplasm. It catalyses the reaction Release of an N-terminal amino acid, Xaa-|-Yaa-, in which Xaa is preferably Leu, but may be other amino acids including Pro although not Arg or Lys, and Yaa may be Pro. Amino acid amides and methyl esters are also readily hydrolyzed, but rates on arylamides are exceedingly low.. It carries out the reaction Release of an N-terminal amino acid, preferentially leucine, but not glutamic or aspartic acids.. Its function is as follows. Presumably involved in the processing and regular turnover of intracellular proteins. Catalyzes the removal of unsubstituted N-terminal amino acids from various peptides. This is Probable cytosol aminopeptidase from Bacillus cereus (strain ATCC 14579 / DSM 31 / CCUG 7414 / JCM 2152 / NBRC 15305 / NCIMB 9373 / NCTC 2599 / NRRL B-3711).